Here is a 575-residue protein sequence, read N- to C-terminus: Epsin-1 (575 aa).

Residues Arg-8, Lys-11, Arg-25, Asn-30, Arg-63, and His-73 each contribute to the a 1,2-diacyl-sn-glycero-3-phospho-(1D-myo-inositol-4,5-bisphosphate) site. One can recognise an ENTH domain in the interval 12 to 144; that stretch reads NIVHNYSEAE…RDEDRLREER (133 aa). Positions 149–186 are disordered; it reads KTKEKLAQTATASSAAVGSGPPPEAEQAWPQSSGEEEL. The span at 157–167 shows a compositional bias: low complexity; that stretch reads TATASSAAVGS. UIM domains lie at 183–202, 208–227, and 233–252; these read EEEL…ADQP, EDDV…HDKE, and GDDL…TGGK. 2 disordered regions span residues 264 to 283 and 293 to 575; these read FTTP…ASVP and SDPW…PFLL. 8 repeat units span residues 274–276, 294–296, 306–308, 319–321, 332–334, 349–351, 367–369, and 377–379. The tract at residues 274-379 is 8 X 3 AA repeats of D-P-W; it reads DPWGGPASVP…APAPAFSDPW (106 aa). The segment covering 306-316 has biased composition (low complexity); that stretch reads DPWGGAAPTPA. A compositionally biased stretch (low complexity) spans 333 to 346; sequence PWGGTPAPAAGEGP. Over residues 367 to 379 the composition is skewed to low complexity; sequence DPWAPAPAFSDPW. Ser-382 carries the post-translational modification Phosphoserine. The [DE]-X(1,2)-F-X-X-[FL]-X-X-X-R motif signature appears at 401 to 410; sequence DEFSDFDRLR. Residues Ser-418 and Ser-419 each carry the phosphoserine modification. Thr-420 is subject to Phosphothreonine. 3 positions are modified to phosphoserine: Ser-434, Ser-446, and Ser-453. Residues 453 to 467 are compositionally biased toward pro residues; the sequence is SPPPAATPTPTPPTR. Phosphothreonine occurs at positions 459, 463, and 469. Ser-472 is modified (phosphoserine). Phosphothreonine is present on Thr-493. 2 tandem repeats follow at residues 501 to 503 and 517 to 519. Residues 501 to 573 form a 3 X 3 AA repeats of N-P-F region; sequence NPFLPSGAPA…GPPAPNTNPF (73 aa). Position 533 is an omega-N-methylarginine (Arg-533). Over residues 556–569 the composition is skewed to pro residues; it reads GLPPMMPPGPPAPN. Repeat 3 spans residues 571–573; that stretch reads NPF.

The protein belongs to the epsin family. Monomer. Binds ITSN1. Binds clathrin, ZBTB16/ZNF145, AP2A1 and AP2A2. Binds ubiquitinated proteins. Interacts with RALBP1 in a complex also containing NUMB and TFAP2A during interphase and mitosis. Interacts with AP2B1. Interacts with UBQLN2. Interacts with REPS2; the interaction is direct. Interacts with EPS15; the interaction is direct. Interacts with ENTREP1. Post-translationally, ubiquitinated. In terms of processing, phosphorylated on serine and/or threonine residues in mitotic cells. Phosphorylation reduces interaction with REPS2, AP-2 and the membrane fraction. Depolarization of synaptosomes results in dephosphorylation. As to expression, ubiquitously expressed. Detected in liver, spleen and testis, and weakly in lung and thymus (at protein level).

The protein localises to the cytoplasm. It localises to the cell membrane. Its subcellular location is the nucleus. The protein resides in the membrane. It is found in the clathrin-coated pit. Functionally, binds to membranes enriched in phosphatidylinositol 4,5-bisphosphate (PtdIns(4,5)P2). Modifies membrane curvature and facilitates the formation of clathrin-coated invaginations. Regulates receptor-mediated endocytosis. This Rattus norvegicus (Rat) protein is Epsin-1 (Epn1).